The following is a 299-amino-acid chain: MEHFDASLSTYFKALLGPRDTRVKGWFLLDNYIPTFICSVIYLLIVWLGPKYMRNKQPFSCRGILVVYNLGLTLLSLYMFCELVTGVWEGKYNFFCQGTRTAGESDMKIIRVLRWYYFSKLIEFMDTFFFILRKNNHQITVLHVYHHASMLNIWWFVMNWVPCGHSYFGATLNSFIHVLMYSYYGLSSVPSMRPYLWWKKYITQGQLLQFVLTIIQTSCGVIWPCTFPLGWLYFQIGYMISLIALFTNFYIQTYNKKGASRRKDHLKDHQNGSVAAVNGHTNSFSPLENNVKPRKLRKD.

N-acetylmethionine is present on M1. 6 helical membrane passes run 26 to 46 (WFLL…LLIV), 64 to 84 (ILVV…CELV), 112 to 132 (VLRW…FFIL), 150 to 170 (MLNI…YFGA), 205 to 225 (GQLL…IWPC), and 226 to 246 (TFPL…IALF). Residues 275–299 (AAVNGHTNSFSPLENNVKPRKLRKD) form a disordered region. Polar residues predominate over residues 279–288 (GHTNSFSPLE). Phosphoserine is present on S285.

This sequence belongs to the ELO family. ELOVL5 subfamily. Interacts with TECR.

The protein localises to the endoplasmic reticulum membrane. Its subcellular location is the cell projection. It is found in the dendrite. The enzyme catalyses a very-long-chain acyl-CoA + malonyl-CoA + H(+) = a very-long-chain 3-oxoacyl-CoA + CO2 + CoA. It catalyses the reaction (6Z,9Z,12Z)-octadecatrienoyl-CoA + malonyl-CoA + H(+) = (8Z,11Z,14Z)-3-oxoeicosatrienoyl-CoA + CO2 + CoA. The catalysed reaction is (9Z,12Z,15Z)-octadecatrienoyl-CoA + malonyl-CoA + H(+) = (11Z,14Z,17Z)-3-oxoeicosatrienoyl-CoA + CO2 + CoA. It carries out the reaction (9Z)-hexadecenoyl-CoA + malonyl-CoA + H(+) = 3-oxo-(11Z)-octadecenoyl-CoA + CO2 + CoA. The enzyme catalyses (9Z)-octadecenoyl-CoA + malonyl-CoA + H(+) = 3-oxo-(11Z)-eicosenoyl-CoA + CO2 + CoA. It catalyses the reaction (11Z)-octadecenoyl-CoA + malonyl-CoA + H(+) = 3-oxo-(13Z)-eicosenoyl-CoA + CO2 + CoA. The catalysed reaction is (9Z,12Z)-octadecadienoyl-CoA + malonyl-CoA + H(+) = (11Z,14Z)-3-oxoicosa-11,14-dienoyl-CoA + CO2 + CoA. It carries out the reaction (6Z,9Z,12Z,15Z)-octadecatetraenoyl-CoA + malonyl-CoA + H(+) = (8Z,11Z,14Z,17Z)-3-oxoicosatetraenoyl-CoA + CO2 + CoA. The enzyme catalyses (5Z,8Z,11Z,14Z)-eicosatetraenoyl-CoA + malonyl-CoA + H(+) = (7Z,10Z,13Z,16Z)-3-oxodocosatetraenoyl-CoA + CO2 + CoA. It catalyses the reaction (5Z,8Z,11Z,14Z,17Z)-eicosapentaenoyl-CoA + malonyl-CoA + H(+) = 3-oxo-(7Z,10Z,13Z,16Z,19Z)-docosapentaenoyl-CoA + CO2 + CoA. It participates in lipid metabolism; polyunsaturated fatty acid biosynthesis. Functionally, catalyzes the first and rate-limiting reaction of the four reactions that constitute the long-chain fatty acids elongation cycle. This endoplasmic reticulum-bound enzymatic process allows the addition of 2 carbons to the chain of long- and very long-chain fatty acids (VLCFAs) per cycle. Condensing enzyme that acts specifically toward polyunsaturated acyl-CoA with the higher activity toward C18:3(n-6) acyl-CoA. May participate in the production of monounsaturated and of polyunsaturated VLCFAs of different chain lengths that are involved in multiple biological processes as precursors of membrane lipids and lipid mediators. In conditions where the essential linoleic and alpha linoleic fatty acids are lacking it is also involved in the synthesis of Mead acid from oleic acid. This Macaca fascicularis (Crab-eating macaque) protein is Very long chain fatty acid elongase 5.